Here is a 503-residue protein sequence, read N- to C-terminus: NAD(P)H-quinone oxidoreductase chain 4, chloroplastic (503 aa).

13 consecutive transmembrane segments (helical) span residues 4-24 (FPWL…IFFL), 37-57 (ICIC…HFQL), 87-107 (IGPT…AWPV), 134-154 (LLLF…LLSM), 167-187 (FILY…GMGL), 208-228 (ALEI…SPII), 242-262 (HYST…YGLV), 272-292 (AHSI…IYAA), 305-325 (IAYS…SITD), 330-350 (GAIL…FLAG), 386-406 (LALP…GIIT), 416-436 (ILIT…SLSM), and 462-482 (LFVS…PDFV).

The protein belongs to the complex I subunit 4 family.

It is found in the plastid. It localises to the chloroplast thylakoid membrane. The catalysed reaction is a plastoquinone + NADH + (n+1) H(+)(in) = a plastoquinol + NAD(+) + n H(+)(out). It carries out the reaction a plastoquinone + NADPH + (n+1) H(+)(in) = a plastoquinol + NADP(+) + n H(+)(out). This is NAD(P)H-quinone oxidoreductase chain 4, chloroplastic from Drimys granadensis.